The primary structure comprises 670 residues: Zinc finger and BTB domain-containing protein 5 (670 aa).

The region spanning 24-93 (CDCVIVVGNR…MYTSTLMLGE (70 aa)) is the BTB domain. Disordered stretches follow at residues 158–256 (LSSS…QEDG) and 268–382 (EDAQ…SSTD). The segment covering 170–181 (PMSSSMRSSLDQ) has biased composition (polar residues). Position 234 is a phosphoserine (Ser-234). Residue Lys-239 forms a Glycyl lysine isopeptide (Lys-Gly) (interchain with G-Cter in SUMO2) linkage. The span at 285–295 (SRATQVETSFE) shows a compositional bias: polar residues. Residues Lys-317 and Lys-325 each participate in a glycyl lysine isopeptide (Lys-Gly) (interchain with G-Cter in SUMO2) cross-link. The span at 345–360 (AEGSESVEVEGVVVSA) shows a compositional bias: low complexity. The span at 361–374 (EKIDLSPESSDRSF) shows a compositional bias: basic and acidic residues. Position 366 is a phosphoserine (Ser-366). Glycyl lysine isopeptide (Lys-Gly) (interchain with G-Cter in SUMO2) cross-links involve residues Lys-399 and Lys-410. Residues 414–432 (SNFSASQSTDDNLPNTTSD) show a composition bias toward polar residues. Disordered stretches follow at residues 414 to 433 (SNFS…TSDC) and 442 to 470 (LLSP…EPAD). Over residues 444 to 459 (SPEAGPAGGPSSAPGS) the composition is skewed to low complexity. Glycyl lysine isopeptide (Lys-Gly) (interchain with G-Cter in SUMO2) cross-links involve residues Lys-535, Lys-587, and Lys-590. A C2H2-type 1 zinc finger spans residues 606–628 (YACKICCKTFLTLTDCKKHIRVH). The C2H2-type 2; atypical zinc-finger motif lies at 634-657 (YACLKCGKRFSQSSHLYKHSKTTC). Residues Lys-638 and Lys-651 each participate in a glycyl lysine isopeptide (Lys-Gly) (interchain with G-Cter in SUMO2) cross-link.

It is found in the nucleus. May be involved in transcriptional regulation. The sequence is that of Zinc finger and BTB domain-containing protein 5 (Zbtb5) from Mus musculus (Mouse).